The sequence spans 409 residues: Tyrosine--tRNA ligase (409 aa).

The short motif at 43–52 is the 'HIGH' region element; the sequence is PTAPDLHLGH. A 'KMSKS' region motif is present at residues 227-231; it reads KMSKS. K230 is an ATP binding site. The region spanning 338–399 is the S4 RNA-binding domain; that stretch reads LALPQLLKLA…GKRKFAKVTL (62 aa).

The protein belongs to the class-I aminoacyl-tRNA synthetase family. TyrS type 2 subfamily. In terms of assembly, homodimer.

It localises to the cytoplasm. It carries out the reaction tRNA(Tyr) + L-tyrosine + ATP = L-tyrosyl-tRNA(Tyr) + AMP + diphosphate + H(+). In terms of biological role, catalyzes the attachment of tyrosine to tRNA(Tyr) in a two-step reaction: tyrosine is first activated by ATP to form Tyr-AMP and then transferred to the acceptor end of tRNA(Tyr). In Nitrosomonas europaea (strain ATCC 19718 / CIP 103999 / KCTC 2705 / NBRC 14298), this protein is Tyrosine--tRNA ligase.